Consider the following 123-residue polypeptide: Large ribosomal subunit protein bL12 (123 aa).

The protein belongs to the bacterial ribosomal protein bL12 family. Homodimer. Part of the ribosomal stalk of the 50S ribosomal subunit. Forms a multimeric L10(L12)X complex, where L10 forms an elongated spine to which 2 to 4 L12 dimers bind in a sequential fashion. Binds GTP-bound translation factors.

Its function is as follows. Forms part of the ribosomal stalk which helps the ribosome interact with GTP-bound translation factors. Is thus essential for accurate translation. This is Large ribosomal subunit protein bL12 from Borrelia turicatae (strain 91E135).